The sequence spans 287 residues: Transcription cofactor vestigial-like protein 4 (287 aa).

Disordered regions lie at residues 44–68 (ASAL…SMEP) and 251–287 (AAKD…SVVS). A phosphoserine mark is found at serine 58 and serine 271. Over residues 275-287 (HMVSHSHSPSVVS) the composition is skewed to low complexity.

This sequence belongs to the vestigial family. In terms of assembly, interacts with TEFs. Interacts with IRF2BP2.

It localises to the nucleus. Its function is as follows. May act as a specific coactivator for the mammalian TEFs. This Mus musculus (Mouse) protein is Transcription cofactor vestigial-like protein 4 (Vgll4).